The sequence spans 362 residues: Sulfate/thiosulfate import ATP-binding protein CysA (362 aa).

Positions 13-243 (ITVRDAYKRY…PTNAFVMSFL (231 aa)) constitute an ABC transporter domain. 45–52 (GPSGSGKS) provides a ligand contact to ATP.

It belongs to the ABC transporter superfamily. Sulfate/tungstate importer (TC 3.A.1.6) family. The complex is composed of two ATP-binding proteins (CysA), two transmembrane proteins (CysT and CysW) and a solute-binding protein (CysP).

The protein localises to the cell membrane. The enzyme catalyses sulfate(out) + ATP + H2O = sulfate(in) + ADP + phosphate + H(+). It catalyses the reaction thiosulfate(out) + ATP + H2O = thiosulfate(in) + ADP + phosphate + H(+). In terms of biological role, part of the ABC transporter complex CysAWTP involved in sulfate/thiosulfate import. Responsible for energy coupling to the transport system. In Mycolicibacterium paratuberculosis (strain ATCC BAA-968 / K-10) (Mycobacterium paratuberculosis), this protein is Sulfate/thiosulfate import ATP-binding protein CysA.